We begin with the raw amino-acid sequence, 627 residues long: Carnitine O-acetyltransferase, mitochondrial (627 aa).

His-336 (proton acceptor) is an active-site residue. CoA-binding positions include Lys-418 and 422 to 429 (KKFKVSPD). (R)-carnitine contacts are provided by Tyr-451, Ser-453, and Thr-464. Gln-553 serves as a coordination point for CoA. A Microbody targeting signal motif is present at residues 625-627 (PKL).

The protein belongs to the carnitine/choline acetyltransferase family.

The protein resides in the peroxisome. Its subcellular location is the mitochondrion inner membrane. It carries out the reaction (R)-carnitine + acetyl-CoA = O-acetyl-(R)-carnitine + CoA. Functionally, carnitine acetylase is specific for short chain fatty acids. Carnitine acetylase seems to affect the flux through the pyruvate dehydrogenase complex. It may be involved as well in the transport of acetyl-CoA into mitochondria. The chain is Carnitine O-acetyltransferase, mitochondrial (CAT2) from Candida tropicalis (Yeast).